A 1598-amino-acid chain; its full sequence is MGVPTKISILGRESIVADFGIWRNYVAKDLLSNCASSTYILISDTNLTPLYLAGFQQSFENAAAGLSPKPRLLTYEIPPGESSKSRETKAEIEDWMLARQPPCGRDTVIIALGGGVIGDLIGFVAATYMRGVRFVQVPTTLLAMVDSSIGGKTAIDTPNGKNLIGAIWQPQRIYLDMEFLNTLPEREFINGMAEVIKTAAISSEEKFAALENDADVILAAVKSKNTPDRLRFSSIQETLKRTILSSAEFKAQVVSADEREGGLRNLLNFGHSIGHAIEAILAPQVLHGECVSIGMVKEAELARHLGILNNVSVARIAKCLASYELPTSLKDERIKRLTAGKHCSVEQIITYMGVDKKNDGPKKKVVLLSAIGRTYEPRASTVSNEDLQVVLAPSIEVYPGFPKSLNVTCTPPGSKSISNRALVLAALGSGTCRIKNLLHSDDTEVMLTALERLGAATFSWESQGEVLVVNGNGGRMVASPKELYLGNAGTASRFLTTVATLAQKGSVASSVLTGNARMKQRPIGDLVDALKANGADIEYLENPKSLPLKITASGGFAGGEMRLDAKVSSQYVSSLLMCAPYAKEPVTLRLVGGKPVSQLYVDMTTAMMRSFGIDVKKSETEEHTYHIPRGVYKNPAEYVVESDASSATYPLAIAAMTGTSCTIPNIGSKSLQGDARFAIEVLRPMGCTVNQTDFSTSVTGTAGGKLKSLPTIDMEPMTDAFLTASVLAAVARGQGSNHTTRICGIANQRVKECNRIKAMKDELAKFGVTCREHDDGLEIDGIDRSTLRHPTEGVFCYDDHRVAMSFSVLALVAPQPTLILEKECVGKTWPGWWNTLAQTFKVKLDGKEVEVEERAETNGVAHLDKSAASIFIIGMRGAGKTTSGVWVSKALQRPFIDLDDELEKSEGMTIPEMIKQRGWEGFRDSELALLRRVMTEKPMGYIFACGGGVVELPEARELLTQYHKTKGNVILAMRDIKEVMDFLKIDKTRPAYVEDMMSVWLRRKPWYQECSNIQYYSRITQPDGMAQVLHGFNRFLKVITGQLDSLAQMRRKENTFFVSLTFPDLTPASNILKEVTLGSDAVELRVDLLKDPQSDSEIPSVDYVAEQISVLRSRVSVPLVFTIRTKSQGGRFPDDAYDAALQLYRLAIRMGSEFVDLELSFPEQLLRTVTEMKGFSKIIASHHDPEGLLSWANGSWIQIYNKALQYGDVIKLVGVAKTLDDNASLKKFKTWAEAKHDVPLIAINMGYKGQLSRILNGFMTPVSHPSLPFKAAPGQLSAREIRKGLSLMGEIKAKKFAVIGKPVSSSRSPAMHNALFKQMGLPHTYGRIETDNVEDVKEFILSPDFGGASVTIPLKLDIMPLLDEIAPEAEMIGAVNTIVSVPAAPGDKSQSSRLIGRNTDWQGMVRCLSDAGAYSAATPTTSSAGLIIGGGGTARAAIFALNSMSYSPIYIVGRSPEKLACMASSFPADYNIRIVDDVKALESLPMVAIGTIPGDKPIELHMREVLCEILSLCEKANVEAERKTGITPKRILLEMAYKPSVTSLMKLASDAGWTVLPGLEVLVAQGVYQSEYWTDITPVYENARKAVMGVSSSDDTIS.

The interval M1–N384 is 3-dehydroquinate synthase. NAD(+)-binding positions include D44–N46, E81–K84, G114–V116, and D119. R130 serves as a coordination point for 7-phospho-2-dehydro-3-deoxy-D-arabino-heptonate. T139 to T140 provides a ligand contact to NAD(+). 7-phospho-2-dehydro-3-deoxy-D-arabino-heptonate-binding residues include D146 and K152. An NAD(+)-binding site is contributed by K161. N162 lines the 7-phospho-2-dehydro-3-deoxy-D-arabino-heptonate pocket. Residues F179–T182 and N190 each bind NAD(+). E194 is a Zn(2+) binding site. 7-phospho-2-dehydro-3-deoxy-D-arabino-heptonate contacts are provided by residues E194 to K197 and K250. The Proton acceptor; for 3-dehydroquinate synthase activity role is filled by E260. 7-phospho-2-dehydro-3-deoxy-D-arabino-heptonate-binding positions include R264–N268 and H271. A Zn(2+)-binding site is contributed by H271. H275 (proton acceptor; for 3-dehydroquinate synthase activity) is an active-site residue. H287 and K356 together coordinate 7-phospho-2-dehydro-3-deoxy-D-arabino-heptonate. Residue H287 coordinates Zn(2+). The segment at V397–V842 is EPSP synthase. The active-site For EPSP synthase activity is C824. Residues A867–S1059 form a shikimate kinase region. G874 to T881 is an ATP binding site. Residues L1060–E1280 form a 3-dehydroquinase region. Residue H1183 is the Proton acceptor; for 3-dehydroquinate dehydratase activity of the active site. K1211 functions as the Schiff-base intermediate with substrate; for 3-dehydroquinate dehydratase activity in the catalytic mechanism. A shikimate dehydrogenase region spans residues A1293 to S1598.

It in the N-terminal section; belongs to the sugar phosphate cyclases superfamily. Dehydroquinate synthase family. This sequence in the 2nd section; belongs to the EPSP synthase family. The protein in the 3rd section; belongs to the shikimate kinase family. In the 4th section; belongs to the type-I 3-dehydroquinase family. It in the C-terminal section; belongs to the shikimate dehydrogenase family. As to quaternary structure, homodimer. Requires Zn(2+) as cofactor.

It localises to the cytoplasm. It carries out the reaction 7-phospho-2-dehydro-3-deoxy-D-arabino-heptonate = 3-dehydroquinate + phosphate. The enzyme catalyses 3-dehydroquinate = 3-dehydroshikimate + H2O. It catalyses the reaction shikimate + NADP(+) = 3-dehydroshikimate + NADPH + H(+). The catalysed reaction is shikimate + ATP = 3-phosphoshikimate + ADP + H(+). It carries out the reaction 3-phosphoshikimate + phosphoenolpyruvate = 5-O-(1-carboxyvinyl)-3-phosphoshikimate + phosphate. Its pathway is metabolic intermediate biosynthesis; chorismate biosynthesis; chorismate from D-erythrose 4-phosphate and phosphoenolpyruvate: step 2/7. It participates in metabolic intermediate biosynthesis; chorismate biosynthesis; chorismate from D-erythrose 4-phosphate and phosphoenolpyruvate: step 3/7. It functions in the pathway metabolic intermediate biosynthesis; chorismate biosynthesis; chorismate from D-erythrose 4-phosphate and phosphoenolpyruvate: step 4/7. The protein operates within metabolic intermediate biosynthesis; chorismate biosynthesis; chorismate from D-erythrose 4-phosphate and phosphoenolpyruvate: step 5/7. Its pathway is metabolic intermediate biosynthesis; chorismate biosynthesis; chorismate from D-erythrose 4-phosphate and phosphoenolpyruvate: step 6/7. In terms of biological role, the AROM polypeptide catalyzes 5 consecutive enzymatic reactions in prechorismate polyaromatic amino acid biosynthesis. This Paracoccidioides brasiliensis (strain Pb18) protein is Pentafunctional AROM polypeptide.